Reading from the N-terminus, the 216-residue chain is ATP phosphoribosyltransferase (216 aa).

The protein belongs to the ATP phosphoribosyltransferase family. Short subfamily. In terms of assembly, heteromultimer composed of HisG and HisZ subunits.

The protein resides in the cytoplasm. It carries out the reaction 1-(5-phospho-beta-D-ribosyl)-ATP + diphosphate = 5-phospho-alpha-D-ribose 1-diphosphate + ATP. Its pathway is amino-acid biosynthesis; L-histidine biosynthesis; L-histidine from 5-phospho-alpha-D-ribose 1-diphosphate: step 1/9. In terms of biological role, catalyzes the condensation of ATP and 5-phosphoribose 1-diphosphate to form N'-(5'-phosphoribosyl)-ATP (PR-ATP). Has a crucial role in the pathway because the rate of histidine biosynthesis seems to be controlled primarily by regulation of HisG enzymatic activity. In Synechococcus sp. (strain CC9902), this protein is ATP phosphoribosyltransferase.